The sequence spans 356 residues: 1-deoxy-D-xylulose 5-phosphate reductoisomerase (356 aa).

Residues threonine 7, glycine 8, serine 9, isoleucine 10, glycine 31, asparagine 33, and asparagine 111 each contribute to the NADPH site. Lysine 112 lines the 1-deoxy-D-xylulose 5-phosphate pocket. Residue glutamate 113 coordinates NADPH. Aspartate 131 serves as a coordination point for Mn(2+). 1-deoxy-D-xylulose 5-phosphate is bound by residues serine 132, glutamate 133, serine 155, and histidine 178. Glutamate 133 is a Mn(2+) binding site. NADPH is bound at residue glycine 184. 1-deoxy-D-xylulose 5-phosphate contacts are provided by serine 191, asparagine 196, lysine 197, and glutamate 200. Glutamate 200 lines the Mn(2+) pocket.

Belongs to the DXR family. Mg(2+) serves as cofactor. The cofactor is Mn(2+).

The catalysed reaction is 2-C-methyl-D-erythritol 4-phosphate + NADP(+) = 1-deoxy-D-xylulose 5-phosphate + NADPH + H(+). It functions in the pathway isoprenoid biosynthesis; isopentenyl diphosphate biosynthesis via DXP pathway; isopentenyl diphosphate from 1-deoxy-D-xylulose 5-phosphate: step 1/6. Its function is as follows. Catalyzes the NADPH-dependent rearrangement and reduction of 1-deoxy-D-xylulose-5-phosphate (DXP) to 2-C-methyl-D-erythritol 4-phosphate (MEP). The protein is 1-deoxy-D-xylulose 5-phosphate reductoisomerase of Campylobacter jejuni (strain RM1221).